The sequence spans 417 residues: Serine hydroxymethyltransferase (417 aa).

(6S)-5,6,7,8-tetrahydrofolate is bound by residues Leu-121 and 125–127 (GHL). Position 229 is an N6-(pyridoxal phosphate)lysine (Lys-229). 354-356 (SPF) is a binding site for (6S)-5,6,7,8-tetrahydrofolate.

Belongs to the SHMT family. Homodimer. Pyridoxal 5'-phosphate serves as cofactor.

It localises to the cytoplasm. The catalysed reaction is (6R)-5,10-methylene-5,6,7,8-tetrahydrofolate + glycine + H2O = (6S)-5,6,7,8-tetrahydrofolate + L-serine. It participates in one-carbon metabolism; tetrahydrofolate interconversion. Its pathway is amino-acid biosynthesis; glycine biosynthesis; glycine from L-serine: step 1/1. Functionally, catalyzes the reversible interconversion of serine and glycine with tetrahydrofolate (THF) serving as the one-carbon carrier. This reaction serves as the major source of one-carbon groups required for the biosynthesis of purines, thymidylate, methionine, and other important biomolecules. Also exhibits THF-independent aldolase activity toward beta-hydroxyamino acids, producing glycine and aldehydes, via a retro-aldol mechanism. The sequence is that of Serine hydroxymethyltransferase from Azotobacter vinelandii (strain DJ / ATCC BAA-1303).